A 313-amino-acid chain; its full sequence is Protein FixB (313 aa).

255-283 (LYLAVGISGQIQHMVGANASQTIFAINKD) provides a ligand contact to FAD.

The protein belongs to the ETF alpha-subunit/FixB family. In terms of assembly, heterodimer of FixA and FixB.

It participates in amine and polyamine metabolism; carnitine metabolism. Required for anaerobic carnitine reduction. May bring reductant to CaiA. This chain is Protein FixB, found in Escherichia coli O17:K52:H18 (strain UMN026 / ExPEC).